The sequence spans 280 residues: Bifunctional protein FolD (280 aa).

NADP(+)-binding positions include glycine 166 to serine 168 and serine 191.

This sequence belongs to the tetrahydrofolate dehydrogenase/cyclohydrolase family. As to quaternary structure, homodimer.

It catalyses the reaction (6R)-5,10-methylene-5,6,7,8-tetrahydrofolate + NADP(+) = (6R)-5,10-methenyltetrahydrofolate + NADPH. The catalysed reaction is (6R)-5,10-methenyltetrahydrofolate + H2O = (6R)-10-formyltetrahydrofolate + H(+). It functions in the pathway one-carbon metabolism; tetrahydrofolate interconversion. Its function is as follows. Catalyzes the oxidation of 5,10-methylenetetrahydrofolate to 5,10-methenyltetrahydrofolate and then the hydrolysis of 5,10-methenyltetrahydrofolate to 10-formyltetrahydrofolate. The polypeptide is Bifunctional protein FolD (Cellvibrio japonicus (strain Ueda107) (Pseudomonas fluorescens subsp. cellulosa)).